We begin with the raw amino-acid sequence, 268 residues long: Indole-3-glycerol phosphate synthase (268 aa).

The protein belongs to the TrpC family.

It catalyses the reaction 1-(2-carboxyphenylamino)-1-deoxy-D-ribulose 5-phosphate + H(+) = (1S,2R)-1-C-(indol-3-yl)glycerol 3-phosphate + CO2 + H2O. Its pathway is amino-acid biosynthesis; L-tryptophan biosynthesis; L-tryptophan from chorismate: step 4/5. In Lachnospira eligens (strain ATCC 27750 / DSM 3376 / VPI C15-48 / C15-B4) (Eubacterium eligens), this protein is Indole-3-glycerol phosphate synthase.